We begin with the raw amino-acid sequence, 882 residues long: Alanine--tRNA ligase (882 aa).

Positions 570, 574, 672, and 676 each coordinate Zn(2+).

This sequence belongs to the class-II aminoacyl-tRNA synthetase family. It depends on Zn(2+) as a cofactor.

Its subcellular location is the cytoplasm. The enzyme catalyses tRNA(Ala) + L-alanine + ATP = L-alanyl-tRNA(Ala) + AMP + diphosphate. Functionally, catalyzes the attachment of alanine to tRNA(Ala) in a two-step reaction: alanine is first activated by ATP to form Ala-AMP and then transferred to the acceptor end of tRNA(Ala). Also edits incorrectly charged Ser-tRNA(Ala) and Gly-tRNA(Ala) via its editing domain. The chain is Alanine--tRNA ligase from Xanthomonas campestris pv. campestris (strain 8004).